A 485-amino-acid chain; its full sequence is Serine/threonine-protein kinase dst4 (485 aa).

One can recognise a Protein kinase domain in the interval 21–278 (FRVLEVIGQG…AVDLLNHPFI (258 aa)). ATP contacts are provided by residues 27–35 (IGQGSFGVV) and K50. D142 (proton acceptor) is an active-site residue. 3 disordered regions span residues 304–343 (RRKK…SAGL), 360–424 (VMRE…GSVV), and 436–485 (SMKL…NQDD). A compositionally biased stretch (acidic residues) spans 310–324 (EEEAEEAEEGDDYDD). Residues 370–393 (SNNGGTFIYNNNNNNSSKTSSSGT) are compositionally biased toward low complexity. Composition is skewed to acidic residues over residues 406–417 (DDDDDDDIEEGG) and 450–468 (SSDE…EEGG). Polar residues predominate over residues 474–485 (VVYTKSPVNQDD).

This sequence belongs to the protein kinase superfamily. STE Ser/Thr protein kinase family. STE20 subfamily. Requires Mg(2+) as cofactor.

The enzyme catalyses L-seryl-[protein] + ATP = O-phospho-L-seryl-[protein] + ADP + H(+). It carries out the reaction L-threonyl-[protein] + ATP = O-phospho-L-threonyl-[protein] + ADP + H(+). This chain is Serine/threonine-protein kinase dst4, found in Dictyostelium discoideum (Social amoeba).